We begin with the raw amino-acid sequence, 449 residues long: 23S rRNA (uracil(1939)-C(5))-methyltransferase RlmD (449 aa).

The TRAM domain occupies 12 to 70 (SKQLSAKQSFSVHQLDHLGAGIAQHQGKVVFIPGALPSETVQAQLTEQKKNYARAKLIK). [4Fe-4S] cluster-binding residues include Cys83, Cys89, Cys92, and Cys170. S-adenosyl-L-methionine contacts are provided by Gln282, Phe311, Asn316, Glu332, Asp359, and Asp379. Cys405 serves as the catalytic Nucleophile.

This sequence belongs to the class I-like SAM-binding methyltransferase superfamily. RNA M5U methyltransferase family. RlmD subfamily.

The catalysed reaction is uridine(1939) in 23S rRNA + S-adenosyl-L-methionine = 5-methyluridine(1939) in 23S rRNA + S-adenosyl-L-homocysteine + H(+). In terms of biological role, catalyzes the formation of 5-methyl-uridine at position 1939 (m5U1939) in 23S rRNA. The polypeptide is 23S rRNA (uracil(1939)-C(5))-methyltransferase RlmD (Shewanella sp. (strain MR-7)).